We begin with the raw amino-acid sequence, 279 residues long: Lipid phosphate phosphatase epsilon 1, chloroplastic (279 aa).

The transit peptide at 1 to 88 (MAASSSLLLL…SFINNSSEIR (88 aa)) directs the protein to the chloroplast. 5 helical membrane-spanning segments follow: residues 126 to 142 (LWAV…SVVL), 164 to 184 (SHAQ…MEWL), 185 to 205 (GTNG…SYFI), 219 to 239 (VVVG…MWNS), and 255 to 275 (VFLF…LNWF).

It belongs to the PA-phosphatase related phosphoesterase family. In terms of tissue distribution, expressed in root tips, root branch points, cotyledons and leaves.

It localises to the plastid. The protein localises to the chloroplast inner membrane. With respect to regulation, inhibited by Mg(2+). Functionally, exhibits phosphatidate phosphatase (PAP) activity in vitro. May play a secondary role as PAP in plastids. This is Lipid phosphate phosphatase epsilon 1, chloroplastic (LPPE1) from Arabidopsis thaliana (Mouse-ear cress).